A 962-amino-acid chain; its full sequence is Leucine--tRNA ligase (962 aa).

The 'HIGH' region motif lies at 40–51; that stretch reads PYPSGAGLHVGH. A 'KMSKS' region motif is present at residues 737–741; that stretch reads KMSKS. Residue Lys740 participates in ATP binding.

It belongs to the class-I aminoacyl-tRNA synthetase family.

It is found in the cytoplasm. The enzyme catalyses tRNA(Leu) + L-leucine + ATP = L-leucyl-tRNA(Leu) + AMP + diphosphate. The sequence is that of Leucine--tRNA ligase from Flavobacterium psychrophilum (strain ATCC 49511 / DSM 21280 / CIP 103535 / JIP02/86).